A 2925-amino-acid polypeptide reads, in one-letter code: TPR and ankyrin repeat-containing protein 1 (2925 aa).

2 TPR repeats span residues 15 to 48 (AVLL…DPTY) and 50 to 82 (KGYY…VQRS). ANK repeat units follow at residues 168 to 198 (EKYV…SVET), 203 to 232 (PLHA…EWKG), 240 to 276 (DGCT…DPTL), 463 to 492 (SQER…DPRA), 497 to 518 (EGDT…DIGF), and 546 to 575 (NGNT…KFDI). Disordered regions lie at residues 612 to 669 (SRQD…LPGT), 706 to 741 (PEDC…DCSE), and 1077 to 1103 (VEPG…SIEV). Residues 624–641 (SKSTAPGHTSQLKSQGSF) are compositionally biased toward polar residues. The segment covering 720–730 (AGKEGKKDDKP) has biased composition (basic and acidic residues). Positions 1085 to 1103 (GGEEEEEEEDEEEEDSIEV) are enriched in acidic residues. TPR repeat units lie at residues 1699-1732 (PAEW…EKEK) and 1793-1826 (LGKI…DLAL). A coiled-coil region spans residues 2301–2330 (EEFEKLLHQEEDNYNRELKALESEKDERGR).

The protein is TPR and ankyrin repeat-containing protein 1 (TRANK1) of Homo sapiens (Human).